The following is a 261-amino-acid chain: Putative outer membrane protein TC_0650 (261 aa).

Residues 1–17 (MRFLFAFILLCSPWVSE) form the signal peptide.

The protein resides in the cell outer membrane. This chain is Putative outer membrane protein TC_0650, found in Chlamydia muridarum (strain MoPn / Nigg).